The chain runs to 63 residues: Large ribosomal subunit protein uL29 (63 aa).

It belongs to the universal ribosomal protein uL29 family.

This Bordetella pertussis (strain Tohama I / ATCC BAA-589 / NCTC 13251) protein is Large ribosomal subunit protein uL29.